Here is a 406-residue protein sequence, read N- to C-terminus: Cysteine desulfurase (406 aa).

Lysine 226 carries the post-translational modification N6-(pyridoxal phosphate)lysine. Residue cysteine 364 is the Cysteine persulfide intermediate of the active site.

The protein belongs to the class-V pyridoxal-phosphate-dependent aminotransferase family. Csd subfamily. As to quaternary structure, homodimer. Interacts with SufE and the SufBCD complex composed of SufB, SufC and SufD. The interaction with SufE is required to mediate the direct transfer of the sulfur atom from the S-sulfanylcysteine. It depends on pyridoxal 5'-phosphate as a cofactor.

Its subcellular location is the cytoplasm. It carries out the reaction (sulfur carrier)-H + L-cysteine = (sulfur carrier)-SH + L-alanine. It catalyses the reaction L-selenocysteine + AH2 = hydrogenselenide + L-alanine + A + H(+). It participates in cofactor biosynthesis; iron-sulfur cluster biosynthesis. Its function is as follows. Cysteine desulfurases mobilize the sulfur from L-cysteine to yield L-alanine, an essential step in sulfur metabolism for biosynthesis of a variety of sulfur-containing biomolecules. Component of the suf operon, which is activated and required under specific conditions such as oxidative stress and iron limitation. Acts as a potent selenocysteine lyase in vitro, that mobilizes selenium from L-selenocysteine. Selenocysteine lyase activity is however unsure in vivo. The sequence is that of Cysteine desulfurase from Escherichia coli O45:K1 (strain S88 / ExPEC).